The following is a 286-amino-acid chain: ATP synthase gamma chain (286 aa).

This sequence belongs to the ATPase gamma chain family. In terms of assembly, F-type ATPases have 2 components, CF(1) - the catalytic core - and CF(0) - the membrane proton channel. CF(1) has five subunits: alpha(3), beta(3), gamma(1), delta(1), epsilon(1). CF(0) has three main subunits: a, b and c.

Its subcellular location is the cell inner membrane. Functionally, produces ATP from ADP in the presence of a proton gradient across the membrane. The gamma chain is believed to be important in regulating ATPase activity and the flow of protons through the CF(0) complex. The sequence is that of ATP synthase gamma chain from Dechloromonas aromatica (strain RCB).